The sequence spans 438 residues: UDP-N-acetylmuramoylalanine--D-glutamate ligase (438 aa).

ATP is bound at residue 112-118 (GSNGKST).

Belongs to the MurCDEF family.

It localises to the cytoplasm. It carries out the reaction UDP-N-acetyl-alpha-D-muramoyl-L-alanine + D-glutamate + ATP = UDP-N-acetyl-alpha-D-muramoyl-L-alanyl-D-glutamate + ADP + phosphate + H(+). It participates in cell wall biogenesis; peptidoglycan biosynthesis. Its function is as follows. Cell wall formation. Catalyzes the addition of glutamate to the nucleotide precursor UDP-N-acetylmuramoyl-L-alanine (UMA). In Yersinia pseudotuberculosis serotype I (strain IP32953), this protein is UDP-N-acetylmuramoylalanine--D-glutamate ligase.